Reading from the N-terminus, the 278-residue chain is Checkpoint protein HUS1B (278 aa).

The protein belongs to the HUS1 family. As to quaternary structure, interacts with RAD1 and RAD9B. Expressed strongly in testis, less in spleen, thymus, prostate, colon and leukocytes.

The chain is Checkpoint protein HUS1B (HUS1B) from Homo sapiens (Human).